The sequence spans 421 residues: Hydrolyase poxO (421 aa).

The Nucleophile role is filled by S239.

Belongs to the AB hydrolase superfamily. FUS2 hydrolase family. Homodimer.

It participates in secondary metabolite biosynthesis. In terms of biological role, hydrolyase; part of the gene cluster that mediates the biosynthesis of oxaleimides, cytotoxic compounds containing an unusual disubstituted succinimide moiety. The first step of the pathway is provided by the HR-PKS poxF that serves in a new mode of collaborative biosynthesis with the PKS-NRPS poxE, by providing the olefin containing amino acid substrate via the synthesis of an ACP-bound dec-4-enoate. The cytochrome P450 monooxygenase poxM-catalyzed oxidation at the alpha-position creates the enzyme-bound 2-hydroxydec-4-enoyl-ACP thioester, which may be prone to spontaneous hydrolysis to yield 2-hydroxydec-4-enoic acid due to increased electrophilicity of the carbonyl. 2-hydroxydec-4-enoic acid can then be further oxidized by poxM to yield the alpha-ketoacid 2-oxodec-4-enoicacid, which is reductively aminated by the aminotransferase poxL to yield (S,E)-2-aminodec-4-enoic acid. The Hybrid PKS-NRPS synthetase poxE then performs condensation between the octaketide product of its PKS modules and the amino group of (S,E)-2-aminodec-4-enoic acid which is activated and incorporated by the adenylation domain. The resulting aminoacyl product can be cyclized by the Diels-Alderase PoxQ and reductively released by the reductive (R) domain of poxE to yield an aldehyde intermediate. The released aldehyde is then substrate for a Knoevenagel condensation by the hydrolyase poxO followed by an oxidation at the 5-position of the pyrrolidone ring. The presence of the olefin from the amino acid building block allows for migration of the substituted allyl group to occur. This allylic transposition reaction takes place in a conjugate addition, semipinacol-like fashion to yield a succinimide intermediate. Iterative two-electron oxidations of the C7 methyl of the succinimide intermediate to the carboxylic acid can be catalyzed by one of two remaining cytochrome P450 monooxygenasess poxC or poxD to yield oxaleimide A. Subsequent oxidation yields the maleimide scaffold oxaleimide I. Both oxaleimide A and oxaleimide I can undergo oxidative modifications in the decalin ring to yield the series of products oxaleimides B to H. In Penicillium oxalicum (strain 114-2 / CGMCC 5302) (Penicillium decumbens), this protein is Hydrolyase poxO.